A 741-amino-acid polypeptide reads, in one-letter code: Cytosolic phospholipase A2 (741 aa).

The C2 domain maps to Met-1–Leu-116. The segment at Met-1 to Pro-172 is phospholipid binding. Ca(2+) is bound by residues Asp-34, Thr-35, Asp-37, Asn-59, Asp-87, Ala-88, and Asn-89. Residues Val-132–Phe-729 enclose the PLA2c domain. Ser-223 functions as the Nucleophile in the catalytic mechanism. The interval Thr-406 to Ala-453 is disordered. Residues Glu-416–Gly-425 show a composition bias toward basic and acidic residues. Residue Ser-498 is modified to Phosphoserine; by MAPK. Asp-540 acts as the Proton acceptor in catalysis.

In terms of processing, activated by phosphorylation on a serine residue.

The protein localises to the cytoplasm. Its subcellular location is the cytoplasmic vesicle. The catalysed reaction is a 1,2-diacyl-sn-glycero-3-phosphocholine + H2O = a 1-acyl-sn-glycero-3-phosphocholine + a fatty acid + H(+). The enzyme catalyses a 1-acyl-sn-glycero-3-phosphocholine + H2O = sn-glycerol 3-phosphocholine + a fatty acid + H(+). Its activity is regulated as follows. Stimulated by agonists such as ATP, EGF, thrombin and bradykinin as well as by cytosolic Ca(2+). In terms of biological role, selectively hydrolyzes arachidonyl phospholipids in the sn-2 position releasing arachidonic acid. Together with its lysophospholipid activity, it is implicated in the initiation of the inflammatory response. This is Cytosolic phospholipase A2 (pla2g4a) from Danio rerio (Zebrafish).